The following is an 854-amino-acid chain: Alkaline phosphatase-like protein PglZ (854 aa).

The protein belongs to the alkaline phosphatase superfamily.

BREX systems (bacteriophage exclusion) provide immunity against bacteriophage. A core protein of a type 1 BREX system. This system allows phage adsorption but prevents phage DNA replication, without degradation of the phage DNA. Methylation of bacterial DNA by PglX probably guides self/non-self discrimination. When the brxA-brxB-brxC-pglX and pglZ-brxL operons are transformed into a susceptible B.subtilis strain (BEST7003) they confer resistance to bacteriophages SPbeta, SP16, Zeta, phi3T and SP02 and partial protection to phages SP01 and SP82G (these include lytic and temperate phage). They do not protect against phages phi105, rho10 or rho14. Additionally confers a very slight reduction in efficiency of plasmid transformation. This chain is Alkaline phosphatase-like protein PglZ, found in Bacillus cereus (strain H3081.97).